Consider the following 363-residue polypeptide: Alanine racemase (363 aa).

K39 serves as the catalytic Proton acceptor; specific for D-alanine. K39 carries the post-translational modification N6-(pyridoxal phosphate)lysine. A substrate-binding site is contributed by R134. The active-site Proton acceptor; specific for L-alanine is Y251. M299 contributes to the substrate binding site.

This sequence belongs to the alanine racemase family. It depends on pyridoxal 5'-phosphate as a cofactor.

It carries out the reaction L-alanine = D-alanine. Its pathway is amino-acid biosynthesis; D-alanine biosynthesis; D-alanine from L-alanine: step 1/1. Catalyzes the interconversion of L-alanine and D-alanine. May also act on other amino acids. This is Alanine racemase (alr) from Thermodesulfovibrio yellowstonii (strain ATCC 51303 / DSM 11347 / YP87).